A 230-amino-acid polypeptide reads, in one-letter code: Type II restriction enzyme MjaV (230 aa).

It catalyses the reaction Endonucleolytic cleavage of DNA to give specific double-stranded fragments with terminal 5'-phosphates.. In terms of biological role, a P subtype restriction enzyme that recognizes the double-stranded sequence 5'-GTAC-3'; the cleavage site is unknown. This is Type II restriction enzyme MjaV (mjaVR) from Methanocaldococcus jannaschii (strain ATCC 43067 / DSM 2661 / JAL-1 / JCM 10045 / NBRC 100440) (Methanococcus jannaschii).